The sequence spans 352 residues: MARSAFGWGFSVIAVLMVGSITACNTTTTTEPGQGENASQAPANLTLVSYAVTRDAFEKIIPKFTEEWKSKTGQDVTFEQSYGGSGSQTRAVVDGLEADIVALALSSDVQKIESAGLIQPGWEQEAPNGSIVTNSVIAFVTKASDNIKVEKWADLANPEVKVITANPKTSGGARWNFLGIWGSVTKTGGTEEQAFDFAGKVLANAPVLPKDARESTDVFYKQGQGNVLLNYENEVLLAKQKGENQPYIIPQDFNVSISGPVAVVDTTVDKKGTREVRDAFVQYLFTPEAQQIFAETGFRPVNEEVLAKFASQYPKVENLATIEEFGGWKKAQAEFFDEGGIFDKVITKIGRQ.

The signal sequence occupies residues 1-40; the sequence is MARSAFGWGFSVIAVLMVGSITACNTTTTTEPGQGENASQ.

Belongs to the prokaryotic sulfate-binding protein family.

The protein resides in the periplasm. This protein specifically binds sulfate and is involved in its transmembrane transport. In Synechocystis sp. (strain ATCC 27184 / PCC 6803 / Kazusa), this protein is Sulfate-binding protein (sbpA).